The following is a 90-amino-acid chain: Probable Fe(2+)-trafficking protein (90 aa).

The protein belongs to the Fe(2+)-trafficking protein family. In terms of assembly, monomer.

Functionally, could be a mediator in iron transactions between iron acquisition and iron-requiring processes, such as synthesis and/or repair of Fe-S clusters in biosynthetic enzymes. The sequence is that of Probable Fe(2+)-trafficking protein from Serratia proteamaculans (strain 568).